We begin with the raw amino-acid sequence, 103 residues long: Small integral membrane protein 32 (103 aa).

Residues 55–75 (YLLLFFLLLLSVALVVLFIGC) form a helical membrane-spanning segment.

The protein resides in the membrane. This Homo sapiens (Human) protein is Small integral membrane protein 32.